A 282-amino-acid polypeptide reads, in one-letter code: ATP phosphoribosyltransferase (282 aa).

Belongs to the ATP phosphoribosyltransferase family. Long subfamily. Requires Mg(2+) as cofactor.

Its subcellular location is the cytoplasm. It carries out the reaction 1-(5-phospho-beta-D-ribosyl)-ATP + diphosphate = 5-phospho-alpha-D-ribose 1-diphosphate + ATP. Its pathway is amino-acid biosynthesis; L-histidine biosynthesis; L-histidine from 5-phospho-alpha-D-ribose 1-diphosphate: step 1/9. With respect to regulation, feedback inhibited by histidine. In terms of biological role, catalyzes the condensation of ATP and 5-phosphoribose 1-diphosphate to form N'-(5'-phosphoribosyl)-ATP (PR-ATP). Has a crucial role in the pathway because the rate of histidine biosynthesis seems to be controlled primarily by regulation of HisG enzymatic activity. This is ATP phosphoribosyltransferase from Pyrobaculum aerophilum (strain ATCC 51768 / DSM 7523 / JCM 9630 / CIP 104966 / NBRC 100827 / IM2).